The chain runs to 809 residues: Leucine--tRNA ligase (809 aa).

The 'HIGH' region signature appears at 40 to 51 (PYPSGQGLHVGH). The 'KMSKS' region motif lies at 581 to 585 (KMSKS). Lys-584 contacts ATP.

Belongs to the class-I aminoacyl-tRNA synthetase family.

The protein localises to the cytoplasm. The enzyme catalyses tRNA(Leu) + L-leucine + ATP = L-leucyl-tRNA(Leu) + AMP + diphosphate. The protein is Leucine--tRNA ligase of Levilactobacillus brevis (strain ATCC 367 / BCRC 12310 / CIP 105137 / JCM 1170 / LMG 11437 / NCIMB 947 / NCTC 947) (Lactobacillus brevis).